The sequence spans 297 residues: Guanylate kinase (297 aa).

The 180-residue stretch at 5-184 (GKVIIISGPS…AVSKITDILI (180 aa)) folds into the Guanylate kinase-like domain. 12-19 (GPSGVGKG) lines the ATP pocket. The tract at residues 205 to 297 (ENIVDQKYTY…IKQRSDFSGD (93 aa)) is unknown.

It belongs to the guanylate kinase family.

The protein resides in the cytoplasm. The enzyme catalyses GMP + ATP = GDP + ADP. In terms of biological role, essential for recycling GMP and indirectly, cGMP. This chain is Guanylate kinase (gmk), found in Mesoplasma florum (strain ATCC 33453 / NBRC 100688 / NCTC 11704 / L1) (Acholeplasma florum).